Reading from the N-terminus, the 675-residue chain is Protein PALS1 (675 aa).

Disordered stretches follow at residues 1–34 (MTTS…KHRE) and 51–78 (RRSA…KKQE). Residues 1-345 (MTTSHMNGHV…QQIKPPPAKE (345 aa)) form a required for the correct localization of PALS1 and PATJ at cell-cell contacts and the normal formation of tight junctions and adherens junctions region. 2 stretches are compositionally biased toward basic and acidic residues: residues 10–34 (VTEE…KHRE) and 54–78 (AQLE…KKQE). S14 and S25 each carry phosphoserine. The tract at residues 21–140 (VDLASPEEHQ…LKHIQHTLVD (120 aa)) is interaction with PARD6B. Phosphoserine is present on residues S83 and S84. L27 domains follow at residues 120–177 (KILE…NKAS) and 179–235 (PFPL…MQLE). Residues 181 to 243 (PLISNAQDLA…LEPITDERVY (63 aa)) form an interaction with LIN7C region. The PDZ domain maps to 256-336 (IVRIEKARDI…TLTFVLIPSQ (81 aa)). An SH3 domain is found at 345–417 (ETVIHVKAHF…PGKSFQQQRE (73 aa)). The Guanylate kinase-like domain occupies 479–660 (KRPIILIGPQ…AYQELLRLIN (182 aa)). ATP is bound at residue 486–493 (GPQNCGQN).

The protein belongs to the MAGUK family. In terms of assembly, heterodimer with MPP1. Forms a heterotrimeric complex composed of PALS1, LIN7B and PATJ; the N-terminal L27 domain of PALS1 interacts with the L27 domain of PATJ and the C-terminal L27 domain of PALS1 interacts with the L27 domain of LIN7B. Component of a complex composed of PALS1, CRB1 and MPP4. Component of a complex whose core is composed of ARHGAP17, AMOT, PALS1, PATJ and PARD3/PAR3. Component of a complex composed of PALS1, CRB1 and EPB41L5. Within the complex, interacts (via HOOK domain) with EPB41L5 (via FERM domain), and interacts with CRB1 (via intracellular domain). Component of a complex composed of PALS1, MPP3 and CRB1; PALS1 acts as a bridging protein between MPP3 (via guanylate kinase-like domain) and CRB1. Component of a complex composed of CRB3, PALS1 and PATJ. As part of the Crumbs complex; interacts with WWP1, the interaction is enhanced by AMOTL2 and facilitates WWP1 localization to the plasma membrane. The Crumbs complex promotes monoubiquitination of AMOTL2 by WWP1, which activates the Hippo signaling pathway. Interacts (via PDZ domain) with PATJ (via N-terminus). Interacts with EZR. Interacts (via PDZ domain) with CRB1 (via C-terminal ERLI motif). While the PDZ domain is sufficient for interaction with CRB1, the adjacent SH3 and guanylate kinase-like domains are likely to contribute to a high affinity interaction. Interacts with WWTR1/TAZ (via WW domain). Interacts with MPP7. Interacts (via PDZ domain) with CRB3 (via C-terminus). Interacts with LIN7C. Interacts with MPDZ. Interacts with PARD6B. Interacts with SC6A1. Interacts with CDH5; the interaction promotes PALS1 localization to cell junctions and is required for CDH5-mediated vascular lumen formation and endothelial cell. Interacts with NPHP1 (via coiled coil and SH3 domains). Interacts with NPHP4. Interacts with CRB2. (Microbial infection) Interacts (via PDZ domain) with human coronaviruses SARS-CoV and, probably, SARS-CoV-2 envelope small membrane protein E (via C-terminus); this inhibits the interaction between PALS1 and CRB3. Expressed at the outer limiting membrane in the retina (at protein level). Expressed in T lymphocytes (at protein level). Expressed in the kidney (at protein level).

The protein resides in the golgi apparatus. Its subcellular location is the cell membrane. The protein localises to the endomembrane system. It localises to the cell junction. It is found in the tight junction. The protein resides in the adherens junction. Its subcellular location is the cell projection. The protein localises to the axon. It localises to the perikaryon. It is found in the apical cell membrane. The protein resides in the endoplasmic reticulum-Golgi intermediate compartment. Its function is as follows. Plays a role in tight junction biogenesis and in the establishment of cell polarity in epithelial cells. Also involved in adherens junction biogenesis by ensuring correct localization of the exocyst complex protein EXOC4/SEC8 which allows trafficking of adherens junction structural component CDH1 to the cell surface. Plays a role through its interaction with CDH5 in vascular lumen formation and endothelial membrane polarity. Required during embryonic and postnatal retinal development. Required for the maintenance of cerebellar progenitor cells in an undifferentiated proliferative state, preventing premature differentiation, and is required for cerebellar histogenesis, fissure formation, cerebellar layer organization and cortical development. Plays a role in neuronal progenitor cell survival, potentially via promotion of mTOR signaling. Plays a role in the radial and longitudinal extension of the myelin sheath in Schwann cells. May modulate SC6A1/GAT1-mediated GABA uptake by stabilizing the transporter. Plays a role in the T-cell receptor-mediated activation of NF-kappa-B. Required for localization of EZR to the apical membrane of parietal cells and may play a role in the dynamic remodeling of the apical cytoskeleton. Required for the normal polarized localization of the vesicular marker STX4. Required for the correct trafficking of the myelin proteins PMP22 and MAG. Involved in promoting phosphorylation and cytoplasmic retention of transcriptional coactivators YAP1 and WWTR1/TAZ which leads to suppression of TGFB1-dependent transcription of target genes such as CCN2/CTGF, SERPINE1/PAI1, SNAI1/SNAIL1 and SMAD7. (Microbial infection) Acts as an interaction partner for human coronaviruses SARS-CoV and, probably, SARS-CoV-2 envelope protein E which results in delayed formation of tight junctions and disregulation of cell polarity. In Homo sapiens (Human), this protein is Protein PALS1.